Reading from the N-terminus, the 129-residue chain is Small ribosomal subunit protein uS8 (129 aa).

This sequence belongs to the universal ribosomal protein uS8 family. Part of the 30S ribosomal subunit.

Functionally, one of the primary rRNA binding proteins, it binds directly to 16S rRNA central domain where it helps coordinate assembly of the platform of the 30S subunit. The sequence is that of Small ribosomal subunit protein uS8 from Archaeoglobus fulgidus (strain ATCC 49558 / DSM 4304 / JCM 9628 / NBRC 100126 / VC-16).